A 397-amino-acid polypeptide reads, in one-letter code: Arginine biosynthesis bifunctional protein ArgJ (397 aa).

The substrate site is built by Thr147, Lys173, Thr184, Glu270, Asn392, and Thr397. The active-site Nucleophile is the Thr184.

This sequence belongs to the ArgJ family. In terms of assembly, heterotetramer of two alpha and two beta chains.

It is found in the cytoplasm. It catalyses the reaction N(2)-acetyl-L-ornithine + L-glutamate = N-acetyl-L-glutamate + L-ornithine. The enzyme catalyses L-glutamate + acetyl-CoA = N-acetyl-L-glutamate + CoA + H(+). It participates in amino-acid biosynthesis; L-arginine biosynthesis; L-ornithine and N-acetyl-L-glutamate from L-glutamate and N(2)-acetyl-L-ornithine (cyclic): step 1/1. It functions in the pathway amino-acid biosynthesis; L-arginine biosynthesis; N(2)-acetyl-L-ornithine from L-glutamate: step 1/4. In terms of biological role, catalyzes two activities which are involved in the cyclic version of arginine biosynthesis: the synthesis of N-acetylglutamate from glutamate and acetyl-CoA as the acetyl donor, and of ornithine by transacetylation between N(2)-acetylornithine and glutamate. In Streptococcus mutans serotype c (strain ATCC 700610 / UA159), this protein is Arginine biosynthesis bifunctional protein ArgJ.